The following is a 515-amino-acid chain: Maturase K (515 aa).

The protein belongs to the intron maturase 2 family. MatK subfamily.

It localises to the plastid. The protein localises to the chloroplast. Functionally, usually encoded in the trnK tRNA gene intron. Probably assists in splicing its own and other chloroplast group II introns. In Pinus banksiana (Jack pine), this protein is Maturase K.